Consider the following 480-residue polypeptide: Methylenetetrahydrofolate--tRNA-(uracil-5-)-methyltransferase TrmFO (480 aa).

15–20 (GGGLAG) is a binding site for FAD.

It belongs to the MnmG family. TrmFO subfamily. FAD is required as a cofactor.

It is found in the cytoplasm. The enzyme catalyses uridine(54) in tRNA + (6R)-5,10-methylene-5,6,7,8-tetrahydrofolate + NADH + H(+) = 5-methyluridine(54) in tRNA + (6S)-5,6,7,8-tetrahydrofolate + NAD(+). It carries out the reaction uridine(54) in tRNA + (6R)-5,10-methylene-5,6,7,8-tetrahydrofolate + NADPH + H(+) = 5-methyluridine(54) in tRNA + (6S)-5,6,7,8-tetrahydrofolate + NADP(+). Functionally, catalyzes the folate-dependent formation of 5-methyl-uridine at position 54 (M-5-U54) in all tRNAs. The sequence is that of Methylenetetrahydrofolate--tRNA-(uracil-5-)-methyltransferase TrmFO from Caulobacter sp. (strain K31).